Reading from the N-terminus, the 236-residue chain is MKITWLGHAAFRLDFAGTAVLIDPFLTHNPVFKGDVAEVSKGVSHILLTHGHSDHIGDTAGIVKAAEAEGRKVIVVANPEVCGFLSGQGLSAFEPMNTGGTVKLDGFSVTMVRADHSSGGDGSNPTYLGNPNGLIVKAAGEPTLWHLGDTDLFSDMALISEIHQPKVAIVPIGDRFTMGPETAALAVRRFISAETVVPCHYGTFPLLVPDASGFVAALQGHSAKVVVPNSGESFEV.

Belongs to the UPF0173 family.

The sequence is that of UPF0173 metal-dependent hydrolase AZC_2841 from Azorhizobium caulinodans (strain ATCC 43989 / DSM 5975 / JCM 20966 / LMG 6465 / NBRC 14845 / NCIMB 13405 / ORS 571).